We begin with the raw amino-acid sequence, 380 residues long: L-prolyl-[peptidyl-carrier protein] dehydrogenase (380 aa).

Residue Glu-243 is the Proton acceptor of the active site. FAD is bound by residues Arg-269 and Gln-280.

It belongs to the acyl-CoA dehydrogenase family. FAD serves as cofactor.

It carries out the reaction L-prolyl-[peptidyl-carrier protein] + 2 oxidized [electron-transfer flavoprotein] + H(+) = (1H-pyrrole-2-carbonyl)-[peptidyl-carrier protein] + 2 reduced [electron-transfer flavoprotein]. Its function is as follows. Involved in the biosynthesis of pyoluteorin. Catalyzes the desaturation of the L-prolyl-[PltL] to yield 1H-pyrrole-2-carbonyl-[PltL]. This chain is L-prolyl-[peptidyl-carrier protein] dehydrogenase, found in Pseudomonas fluorescens (strain ATCC BAA-477 / NRRL B-23932 / Pf-5).